Consider the following 134-residue polypeptide: Small ribosomal subunit protein bS16 (134 aa).

The disordered stretch occupies residues Ala79–Glu134. Low complexity predominate over residues Ala115 to Glu134.

It belongs to the bacterial ribosomal protein bS16 family.

The chain is Small ribosomal subunit protein bS16 from Brucella abortus (strain S19).